The following is a 416-amino-acid chain: Serine hydroxymethyltransferase 1 (416 aa).

Residues L121 and 125–127 (GHL) each bind (6S)-5,6,7,8-tetrahydrofolate. Residue K229 is modified to N6-(pyridoxal phosphate)lysine. (6S)-5,6,7,8-tetrahydrofolate is bound by residues E245 and 354–356 (SPF).

The protein belongs to the SHMT family. In terms of assembly, homodimer. Pyridoxal 5'-phosphate serves as cofactor.

It localises to the cytoplasm. The enzyme catalyses (6R)-5,10-methylene-5,6,7,8-tetrahydrofolate + glycine + H2O = (6S)-5,6,7,8-tetrahydrofolate + L-serine. It functions in the pathway one-carbon metabolism; tetrahydrofolate interconversion. The protein operates within amino-acid biosynthesis; glycine biosynthesis; glycine from L-serine: step 1/1. Its function is as follows. Catalyzes the reversible interconversion of serine and glycine with tetrahydrofolate (THF) serving as the one-carbon carrier. This reaction serves as the major source of one-carbon groups required for the biosynthesis of purines, thymidylate, methionine, and other important biomolecules. Also exhibits THF-independent aldolase activity toward beta-hydroxyamino acids, producing glycine and aldehydes, via a retro-aldol mechanism. The protein is Serine hydroxymethyltransferase 1 of Vibrio cholerae serotype O1 (strain ATCC 39315 / El Tor Inaba N16961).